Here is a 247-residue protein sequence, read N- to C-terminus: Phosphate import ATP-binding protein PstB (247 aa).

Residues 2-242 form the ABC transporter domain; it reads CRDVNVYYGE…PRHPLTEDYI (241 aa). 32–39 is a binding site for ATP; it reads GPSGCGKS.

This sequence belongs to the ABC transporter superfamily. Phosphate importer (TC 3.A.1.7) family. The complex is composed of two ATP-binding proteins (PstB), two transmembrane proteins (PstC and PstA) and a solute-binding protein (PstS).

It localises to the cell inner membrane. The catalysed reaction is phosphate(out) + ATP + H2O = ADP + 2 phosphate(in) + H(+). Its function is as follows. Part of the ABC transporter complex PstSACB involved in phosphate import. Responsible for energy coupling to the transport system. This is Phosphate import ATP-binding protein PstB from Methylococcus capsulatus (strain ATCC 33009 / NCIMB 11132 / Bath).